Reading from the N-terminus, the 182-residue chain is Translation initiation factor IF-3 (182 aa).

It belongs to the IF-3 family. Monomer.

The protein localises to the cytoplasm. In terms of biological role, IF-3 binds to the 30S ribosomal subunit and shifts the equilibrium between 70S ribosomes and their 50S and 30S subunits in favor of the free subunits, thus enhancing the availability of 30S subunits on which protein synthesis initiation begins. This chain is Translation initiation factor IF-3, found in Tropheryma whipplei (strain TW08/27) (Whipple's bacillus).